Here is a 581-residue protein sequence, read N- to C-terminus: MNIENYLSETLAKVFQKLGYAESFAKVVTSTREDVRHFQCNGAMPLAKFAKKPPLAIAEEIVEHIDAEDIFAKLEVAKPGFINITLAPKFLADTTNRFLNSNKFGVQNNLPNRKVVLDFGGPNVAKPMHVGHIRSALLGDALQRIHRFCGDTVVSDVHLGDWGTQMGMLIEEIKLQSPQLVYFDENYTGEYPTESPVTVQELAEIYPRASKRCKSDINEMEKARLATFELQQGRRGYVALWQHFVRISIDAVKKDFDSLDVHFDLWLGESDANKFIDEMISYFQANNFIYEDEGAWVIDTNKDGVPPLIVIKKDGGVMYGTTDLATLWQRSKDLDPDEIIYVVDKRQSLHFKQVFSVAERTKVVSEKCKLKHVAFGTVNGKDGRPFKTREGGVMHLADLISQAKEYAKNRMPDENDDSIINQIAMATIKFGDLINNYANDYFFDLEKFAQHEGKTGPYLLYTVVRAKSILRKIFGDNYDIKSLAKDYKVVNAHNEYEEKLQLQLIQFPIAVQRAYENSQPHHICEYAYSLANSFNKFYVNCPINNLDDESLKKARIALCMATVKAMTIASDLIGISIPERM.

A 'HIGH' region motif is present at residues 122–132 (PNVAKPMHVGH).

Belongs to the class-I aminoacyl-tRNA synthetase family. In terms of assembly, monomer.

The protein localises to the cytoplasm. It carries out the reaction tRNA(Arg) + L-arginine + ATP = L-arginyl-tRNA(Arg) + AMP + diphosphate. The chain is Arginine--tRNA ligase from Francisella tularensis subsp. tularensis (strain FSC 198).